The following is a 524-amino-acid chain: GMP synthase [glutamine-hydrolyzing] (524 aa).

Residues 8-206 (RILILDFGSQ…IYDICGCEAL (199 aa)) enclose the Glutamine amidotransferase type-1 domain. The Nucleophile role is filled by Cys-85. Residues His-180 and Glu-182 contribute to the active site. A GMPS ATP-PPase domain is found at 207–399 (WEPRHIIAKS…LGLPFELVYR (193 aa)). 234-240 (SGGVDSS) provides a ligand contact to ATP.

As to quaternary structure, homodimer.

The catalysed reaction is XMP + L-glutamine + ATP + H2O = GMP + L-glutamate + AMP + diphosphate + 2 H(+). It participates in purine metabolism; GMP biosynthesis; GMP from XMP (L-Gln route): step 1/1. In terms of biological role, catalyzes the synthesis of GMP from XMP. The protein is GMP synthase [glutamine-hydrolyzing] of Nitrosococcus oceani (strain ATCC 19707 / BCRC 17464 / JCM 30415 / NCIMB 11848 / C-107).